The chain runs to 334 residues: Glycerol-3-phosphate dehydrogenase [NAD(P)+] (334 aa).

The NADPH site is built by Trp13, Arg33, and Lys106. Residues Lys106, Gly137, and Ser139 each contribute to the sn-glycerol 3-phosphate site. An NADPH-binding site is contributed by Ala141. 5 residues coordinate sn-glycerol 3-phosphate: Lys192, Asp245, Ser255, Arg256, and Asn257. The active-site Proton acceptor is Lys192. Arg256 is a binding site for NADPH. NADPH-binding residues include Val280 and Glu282.

It belongs to the NAD-dependent glycerol-3-phosphate dehydrogenase family.

Its subcellular location is the cytoplasm. It catalyses the reaction sn-glycerol 3-phosphate + NAD(+) = dihydroxyacetone phosphate + NADH + H(+). The enzyme catalyses sn-glycerol 3-phosphate + NADP(+) = dihydroxyacetone phosphate + NADPH + H(+). Its pathway is membrane lipid metabolism; glycerophospholipid metabolism. Catalyzes the reduction of the glycolytic intermediate dihydroxyacetone phosphate (DHAP) to sn-glycerol 3-phosphate (G3P), the key precursor for phospholipid synthesis. In Chlamydia caviae (strain ATCC VR-813 / DSM 19441 / 03DC25 / GPIC) (Chlamydophila caviae), this protein is Glycerol-3-phosphate dehydrogenase [NAD(P)+].